The following is a 490-amino-acid chain: GTPase Der (490 aa).

2 consecutive EngA-type G domains span residues 3–166 (PVIA…PRDE) and 196–369 (IKIA…KSAV). GTP is bound by residues 9-16 (GRPNVGKS), 56-60 (DTGGI), 118-121 (NKID), 202-209 (GRPNVGKS), 249-253 (DTAGV), and 314-317 (NKWD). The KH-like domain occupies 370 to 454 (TRWPTSRLTQ…PIRIEFKGGE (85 aa)). The tract at residues 452–490 (GGENPYEGNKNTLTDRQVNKKRRMMSHHKKADKKRRDKR) is disordered. A compositionally biased stretch (basic residues) spans 470-490 (NKKRRMMSHHKKADKKRRDKR).

Belongs to the TRAFAC class TrmE-Era-EngA-EngB-Septin-like GTPase superfamily. EngA (Der) GTPase family. Associates with the 50S ribosomal subunit.

Functionally, GTPase that plays an essential role in the late steps of ribosome biogenesis. The protein is GTPase Der of Pseudomonas syringae pv. syringae (strain B728a).